The sequence spans 143 residues: Large-conductance mechanosensitive channel (143 aa).

The next 2 membrane-spanning stretches (helical) occupy residues 10 to 30 and 89 to 109; these read FAVKGNVMDLAIGVIIGGAFS and GSFITVLINFIILAFIIFLMV.

It belongs to the MscL family. As to quaternary structure, homopentamer.

It is found in the cell inner membrane. Its function is as follows. Channel that opens in response to stretch forces in the membrane lipid bilayer. May participate in the regulation of osmotic pressure changes within the cell. The sequence is that of Large-conductance mechanosensitive channel from Burkholderia pseudomallei (strain 668).